The chain runs to 492 residues: Serine incorporator 4 (492 aa).

Transmembrane regions (helical) follow at residues 59–79, 113–133, 148–168, 179–199, 219–239, 254–274, 281–301, 330–350, 421–441, and 464–484; these read YILL…KTVV, AVYR…VLLV, SFWS…FCIP, IGIC…TAFA, GVSL…VLLF, LLSL…APCI, SGLL…FSAL, IPDT…VLFA, GFHF…TNWF, and VASC…PLLA.

This sequence belongs to the TDE1 family.

It is found in the membrane. In terms of biological role, incorporates a polar amino acid serine into membranes and facilitates the synthesis of two serine-derived lipids, phosphatidylserine and sphingolipids. In Mus musculus (Mouse), this protein is Serine incorporator 4 (Serinc4).